The sequence spans 76 residues: Small ribosomal subunit protein bS18 (76 aa).

The protein belongs to the bacterial ribosomal protein bS18 family. As to quaternary structure, part of the 30S ribosomal subunit. Forms a tight heterodimer with protein bS6.

In terms of biological role, binds as a heterodimer with protein bS6 to the central domain of the 16S rRNA, where it helps stabilize the platform of the 30S subunit. This chain is Small ribosomal subunit protein bS18, found in Alcanivorax borkumensis (strain ATCC 700651 / DSM 11573 / NCIMB 13689 / SK2).